We begin with the raw amino-acid sequence, 555 residues long: 3-oxocholest-4-en-26-oate--CoA ligase (555 aa).

ATP contacts are provided by residues 172–180, D418, R433, and K524; that span reads TGGTTGHPK. Positions 525–555 are disordered; the sequence is PDYRWAKDQTGLRPADEVYNNGDGNGAAATG. Low complexity predominate over residues 544–555; it reads NNGDGNGAAATG.

The protein belongs to the ATP-dependent AMP-binding enzyme family.

It catalyses the reaction (25S)-3-oxocholest-4-en-26-oate + ATP + CoA = (25S)-3-oxocholest-4-en-26-oyl-CoA + AMP + diphosphate. The protein operates within steroid metabolism; cholesterol metabolism. In terms of biological role, involved in the degradation of the side chains of C-24 branched-chain sterols. Catalyzes the ATP-dependent CoA thioesterification of the sterol 3-oxocholest-4-en-26-oate to yield 3-oxocholest-4-en-26-oyl-CoA. It can also use beta-sitosterol, campesterol and 3beta-hydroxy-5-cholesten-26-oate. This Rhodococcus rhodochrous protein is 3-oxocholest-4-en-26-oate--CoA ligase.